Reading from the N-terminus, the 303-residue chain is Hemolysin E (303 aa).

Cys-87 and Cys-285 are oxidised to a cystine. A helical membrane pass occupies residues 179 to 199 (AGAAAGIVAGPFGLIISYSIA).

Belongs to the hemolysin E family. As to quaternary structure, monomer and oligomer. In periplasm, it is present as a monomer, while in outer membrane vesicles, it oligomerizes to form a pore structure that is active. The pore is formed by a dodecamer. In terms of processing, in periplasm, it forms a disulfide bond, which prevents the oligomerization. In outer membrane vesicles, the redox status prevents formation of the disulfide bond, leading to oligomerization and pore formation.

It localises to the secreted. It is found in the periplasm. Its subcellular location is the host cell membrane. In terms of biological role, toxin, which has some hemolytic activity towards mammalian cells. Acts by forming a pore-like structure upon contact with mammalian cells. The sequence is that of Hemolysin E (hlyE) from Salmonella paratyphi A (strain ATCC 9150 / SARB42).